The primary structure comprises 34 residues: Photosystem I reaction center subunit XII (34 aa).

A helical membrane pass occupies residues 5-25 (ISSPEIFIALVVAAHAAILAL).

It belongs to the PsaM family.

It is found in the cellular thylakoid membrane. The sequence is that of Photosystem I reaction center subunit XII from Synechococcus sp. (strain CC9902).